The following is a 498-amino-acid chain: ATP synthase subunit beta, chloroplastic (498 aa).

An ATP-binding site is contributed by 172 to 179; it reads GGAGVGKT.

The protein belongs to the ATPase alpha/beta chains family. F-type ATPases have 2 components, CF(1) - the catalytic core - and CF(0) - the membrane proton channel. CF(1) has five subunits: alpha(3), beta(3), gamma(1), delta(1), epsilon(1). CF(0) has four main subunits: a(1), b(1), b'(1) and c(9-12).

The protein localises to the plastid. Its subcellular location is the chloroplast thylakoid membrane. The enzyme catalyses ATP + H2O + 4 H(+)(in) = ADP + phosphate + 5 H(+)(out). In terms of biological role, produces ATP from ADP in the presence of a proton gradient across the membrane. The catalytic sites are hosted primarily by the beta subunits. The polypeptide is ATP synthase subunit beta, chloroplastic (Nicotiana bigelovii (Bigelov's tobacco)).